The primary structure comprises 210 residues: Oligoribonuclease (210 aa).

An Exonuclease domain is found at 12–177 (LVWIDLEMTG…ADIVESIREL (166 aa)). Tyrosine 134 is a catalytic residue.

This sequence belongs to the oligoribonuclease family.

It is found in the cytoplasm. In terms of biological role, 3'-to-5' exoribonuclease specific for small oligoribonucleotides. This chain is Oligoribonuclease, found in Corynebacterium diphtheriae (strain ATCC 700971 / NCTC 13129 / Biotype gravis).